Reading from the N-terminus, the 153-residue chain is Peptide methionine sulfoxide reductase MsrA (153 aa).

The active site involves Cys10.

Belongs to the MsrA Met sulfoxide reductase family.

It catalyses the reaction L-methionyl-[protein] + [thioredoxin]-disulfide + H2O = L-methionyl-(S)-S-oxide-[protein] + [thioredoxin]-dithiol. The enzyme catalyses [thioredoxin]-disulfide + L-methionine + H2O = L-methionine (S)-S-oxide + [thioredoxin]-dithiol. In terms of biological role, has an important function as a repair enzyme for proteins that have been inactivated by oxidation. Catalyzes the reversible oxidation-reduction of methionine sulfoxide in proteins to methionine. The sequence is that of Peptide methionine sulfoxide reductase MsrA from Methanococcoides burtonii (strain DSM 6242 / NBRC 107633 / OCM 468 / ACE-M).